Reading from the N-terminus, the 485-residue chain is Trigger factor (485 aa).

In terms of domain architecture, PPIase FKBP-type spans 169 to 261 (GDVAIVDFVG…LKELKEKELP (93 aa)).

This sequence belongs to the FKBP-type PPIase family. Tig subfamily.

It is found in the cytoplasm. It catalyses the reaction [protein]-peptidylproline (omega=180) = [protein]-peptidylproline (omega=0). Involved in protein export. Acts as a chaperone by maintaining the newly synthesized protein in an open conformation. Functions as a peptidyl-prolyl cis-trans isomerase. This is Trigger factor from Trichodesmium erythraeum (strain IMS101).